Reading from the N-terminus, the 60-residue chain is Metallothionein (60 aa).

The beta stretch occupies residues methionine 1–cysteine 28. 20 residues coordinate a divalent metal cation: cysteine 4, cysteine 6, cysteine 12, cysteine 14, cysteine 18, cysteine 20, cysteine 23, cysteine 25, cysteine 28, cysteine 32, cysteine 33, cysteine 35, cysteine 36, cysteine 40, cysteine 43, cysteine 47, cysteine 49, cysteine 54, cysteine 58, and cysteine 59. Positions lysine 29 to glutamine 60 are alpha.

It belongs to the metallothionein superfamily. Type 1 family.

In terms of biological role, metallothioneins have a high content of cysteine residues that bind various heavy metals. The protein is Metallothionein (mt) of Oryzias latipes (Japanese rice fish).